A 181-amino-acid polypeptide reads, in one-letter code: ATP-dependent protease subunit HslV (181 aa).

The active site involves threonine 7. Glycine 166, cysteine 169, and threonine 172 together coordinate Na(+).

Belongs to the peptidase T1B family. HslV subfamily. In terms of assembly, a double ring-shaped homohexamer of HslV is capped on each side by a ring-shaped HslU homohexamer. The assembly of the HslU/HslV complex is dependent on binding of ATP.

The protein localises to the cytoplasm. It catalyses the reaction ATP-dependent cleavage of peptide bonds with broad specificity.. Its activity is regulated as follows. Allosterically activated by HslU binding. Functionally, protease subunit of a proteasome-like degradation complex believed to be a general protein degrading machinery. In Variovorax paradoxus (strain S110), this protein is ATP-dependent protease subunit HslV.